Here is a 347-residue protein sequence, read N- to C-terminus: Protein YIPF3 (347 aa).

A disordered region spans residues 1 to 31; it reads MATPAAPASGVRNGAGPEWGGFEENIQGGGS. Alanine 2 is subject to N-acetylalanine; in Protein YIPF3, N-terminally processed. Topologically, residues 2–145 are cytoplasmic; it reads ATPAAPASGV…PIKMVNFPQK (144 aa). The chain crosses the membrane as a helical span at residues 146–166; sequence VAGELYGPLMLVFTLVAILLH. Residues 167–184 are Lumenal-facing; that stretch reads GMKTSDTIIREGTLMGTA. The chain crosses the membrane as a helical span at residues 185 to 205; the sequence is IGTCFGYWLGVSSFIYFLAYL. The Cytoplasmic portion of the chain corresponds to 206 to 211; the sequence is CNAQIT. The helical transmembrane segment at 212 to 234 threads the bilayer; the sequence is MLQMLALLGYGLFGHCIVLFITY. Topologically, residues 235-237 are lumenal; it reads NIH. A helical membrane pass occupies residues 238 to 260; sequence LHALFYLFWLLVGGLSTLRMVAV. Residues 261 to 271 are Cytoplasmic-facing; sequence LVSRTVGPTQR. A helical transmembrane segment spans residues 272–292; the sequence is LLLCGTLAALHMLFLLYLHFA. Residues 293-347 lie on the Lumenal side of the membrane; that stretch reads YHKVVEGILDTLEGPNIPPMQRVPRDIPAVLPAARLPVAVINATAKAIAVTLQSH. N-linked (GlcNAc...) asparagine glycosylation occurs at asparagine 334.

It belongs to the YIP1 family. In terms of assembly, interacts with YIPF4 and YIPF5. In terms of tissue distribution, expressed by splenocytes (at protein level).

It is found in the cell membrane. The protein localises to the golgi apparatus. Its subcellular location is the cis-Golgi network membrane. It localises to the cytoplasm. Involved in the maintenance of the Golgi structure. May play a role in hematopoiesis. This is Protein YIPF3 (Yipf3) from Mus musculus (Mouse).